We begin with the raw amino-acid sequence, 345 residues long: N-acetyl-gamma-glutamyl-phosphate reductase (345 aa).

The active site involves cysteine 151.

It belongs to the NAGSA dehydrogenase family. Type 1 subfamily.

The protein localises to the cytoplasm. It catalyses the reaction N-acetyl-L-glutamate 5-semialdehyde + phosphate + NADP(+) = N-acetyl-L-glutamyl 5-phosphate + NADPH + H(+). Its pathway is amino-acid biosynthesis; L-arginine biosynthesis; N(2)-acetyl-L-ornithine from L-glutamate: step 3/4. In terms of biological role, catalyzes the NADPH-dependent reduction of N-acetyl-5-glutamyl phosphate to yield N-acetyl-L-glutamate 5-semialdehyde. In Clostridium novyi (strain NT), this protein is N-acetyl-gamma-glutamyl-phosphate reductase.